A 140-amino-acid polypeptide reads, in one-letter code: Mediator of RNA polymerase II transcription subunit 21 (140 aa).

The stretch at 52-130 (EERERTLEEL…CDELILKLAQ (79 aa)) forms a coiled coil.

Belongs to the Mediator complex subunit 21 family. Component of the Mediator complex.

It localises to the nucleus. Functionally, component of the Mediator complex, a coactivator involved in the regulated transcription of nearly all RNA polymerase II-dependent genes. Mediator functions as a bridge to convey information from gene-specific regulatory proteins to the basal RNA polymerase II transcription machinery. Mediator is recruited to promoters by direct interactions with regulatory proteins and serves as a scaffold for the assembly of a functional preinitiation complex with RNA polymerase II and the general transcription factors. This Yarrowia lipolytica (strain CLIB 122 / E 150) (Yeast) protein is Mediator of RNA polymerase II transcription subunit 21 (SRB7).